The primary structure comprises 402 residues: CMP-sialic acid transporter 3 (402 aa).

The Cytoplasmic portion of the chain corresponds to Met-1–Asn-42. Residues Val-43–Cys-63 traverse the membrane as a helical segment. Residues Lys-64 to Pro-73 lie on the Lumenal side of the membrane. A helical transmembrane segment spans residues Val-74 to Ile-94. At Gln-95 to Asn-118 the chain is on the cytoplasmic side. A helical membrane pass occupies residues Asn-119–Met-139. The Lumenal portion of the chain corresponds to Gln-140 to Ala-146. A helical membrane pass occupies residues Thr-147 to Met-167. Residues Arg-168–Arg-170 lie on the Cytoplasmic side of the membrane. A helical transmembrane segment spans residues Phe-171 to Leu-191. Over Lys-192–Gly-202 the chain is Lumenal. A helical transmembrane segment spans residues Leu-203 to Ala-223. At Ser-224 to Asn-243 the chain is on the cytoplasmic side. The helical transmembrane segment at Leu-244–Ile-264 threads the bilayer. Over Gln-265–Thr-280 the chain is Lumenal. The chain crosses the membrane as a helical span at residues Met-281 to Ala-301. At Asp-302 to Ser-321 the chain is on the cytoplasmic side. A helical transmembrane segment spans residues Ala-322–Ile-342. Over Ser-343 to Val-402 the chain is Lumenal.

It belongs to the nucleotide-sugar transporter family. CMP-Sialate:CMP antiporter (TC 2.A.7.12) subfamily.

It is found in the golgi apparatus membrane. Functionally, sugar transporter involved in the transport of CMP-sialic acid from the cytoplasm into the Golgi. May transport important nucleotide sugars such as CMP-Kdo (2-keto-3-deoxy-D-manno-octulosonic acid) in physiological conditions. This Oryza sativa subsp. indica (Rice) protein is CMP-sialic acid transporter 3.